A 399-amino-acid polypeptide reads, in one-letter code: MSDSKEQRVQPLGLLEEDPTTSGIRLFPRDFQFQQTHGHKSSTGCLGHGPLVLQLLSFTLLAGVLVAILVQVYKVPSSLSQEQSEQDVIYQNLTQLKAAVGELSEKSKLQEIYQELIQLKAAVGELPEKSTLQEIYQELTRLKAAVGELPEKSRLQEIYQELTRLKAAVGELPEKSKQQEIYQELTRLKAAVGELPEKSKQQEIYQELTRLKAAVGELPEKSKQQEIYQELTRLKAAVGELPDQSKQQQIYQELTDLKTAFERLCCRCPKDWTFFQGNCYFISNSQRNWHDSVTACREVGAQLVVIKSAEEQNFLQLQSSRSNRFAWMGLSDLNQEGTWQWVDGSPLSSSFQRYWNSGEPNNSGDEDCAEFSGSGWNDNRCNVDNYWICKKPTACFRDE.

Over Met1–Gly49 the chain is Cytoplasmic. An Endocytosis signal motif is present at residues Leu14–Leu15. A helical; Signal-anchor for type II membrane protein transmembrane segment spans residues Pro50–Val70. At Gln71–Glu399 the chain is on the extracellular side. Asn92 carries an N-linked (GlcNAc...) asparagine glycan. A run of 7 repeats spans residues Lys108–Ser130, Thr131–Ser153, Arg154–Ser176, Lys177–Ser199, Lys200–Ser222, Lys223–Ser245, and Lys246–Cys268. Positions Lys108–Pro269 are 7 X approximate tandem repeats. 4 cysteine pairs are disulfide-bonded: Cys265–Cys395, Cys268–Cys279, Cys296–Cys389, and Cys368–Cys381. The C-type lectin domain maps to Phe274–Lys390. The Ca(2+) site is built by Glu359, Asn361, Ser363, Glu366, Asn377, and Asp378. Residue Asn361 is glycosylated (N-linked (GlcNAc...) asparagine).

In terms of assembly, homotetramer.

It localises to the membrane. Its function is as follows. Probable pathogen-recognition receptor involved in peripheral immune surveillance in liver. May mediate the endocytosis of pathogens which are subsequently degraded in lysosomal compartments. Probably recognizes in a calcium-dependent manner high mannose N-linked oligosaccharides in a variety of pathogen antigens. Is a receptor for ICAM3, probably by binding to mannose-like carbohydrates. This Hylobates lar (Lar gibbon) protein is C-type lectin domain family 4 member M (CLEC4M).